A 150-amino-acid chain; its full sequence is Peptide deformylase 2 (150 aa).

Fe cation is bound by residues Cys-89 and His-131. Glu-132 is an active-site residue. Residue His-135 coordinates Fe cation.

The protein belongs to the polypeptide deformylase family. Fe(2+) is required as a cofactor.

It carries out the reaction N-terminal N-formyl-L-methionyl-[peptide] + H2O = N-terminal L-methionyl-[peptide] + formate. Functionally, removes the formyl group from the N-terminal Met of newly synthesized proteins. Requires at least a dipeptide for an efficient rate of reaction. N-terminal L-methionine is a prerequisite for activity but the enzyme has broad specificity at other positions. The sequence is that of Peptide deformylase 2 from Clostridium acetobutylicum (strain ATCC 824 / DSM 792 / JCM 1419 / IAM 19013 / LMG 5710 / NBRC 13948 / NRRL B-527 / VKM B-1787 / 2291 / W).